Reading from the N-terminus, the 644-residue chain is Macrolide export ATP-binding/permease protein MacB (644 aa).

The region spanning Ile-4–Ala-242 is the ABC transporter domain. ATP is bound at residue Gly-40–Ser-47. 4 helical membrane passes run Leu-270–Gly-290, Ile-524–Val-544, Leu-574–Phe-594, and Ala-607–Met-627.

This sequence belongs to the ABC transporter superfamily. Macrolide exporter (TC 3.A.1.122) family. As to quaternary structure, homodimer.

It is found in the cell inner membrane. Its function is as follows. Non-canonical ABC transporter that contains transmembrane domains (TMD), which form a pore in the inner membrane, and an ATP-binding domain (NBD), which is responsible for energy generation. Confers resistance against macrolides. The sequence is that of Macrolide export ATP-binding/permease protein MacB from Neisseria meningitidis serogroup B (strain ATCC BAA-335 / MC58).